The sequence spans 237 residues: Pyridoxine 5'-phosphate synthase (237 aa).

Asparagine 7 and arginine 18 together coordinate 3-amino-2-oxopropyl phosphate. Residue histidine 43 is the Proton acceptor of the active site. Residues arginine 45 and histidine 50 each coordinate 1-deoxy-D-xylulose 5-phosphate. Glutamate 70 serves as the catalytic Proton acceptor. Residue threonine 100 participates in 1-deoxy-D-xylulose 5-phosphate binding. The active-site Proton donor is histidine 190. 3-amino-2-oxopropyl phosphate is bound by residues aspartate 191 and 213-214 (GH).

It belongs to the PNP synthase family. In terms of assembly, homooctamer; tetramer of dimers.

Its subcellular location is the cytoplasm. It carries out the reaction 3-amino-2-oxopropyl phosphate + 1-deoxy-D-xylulose 5-phosphate = pyridoxine 5'-phosphate + phosphate + 2 H2O + H(+). Its pathway is cofactor biosynthesis; pyridoxine 5'-phosphate biosynthesis; pyridoxine 5'-phosphate from D-erythrose 4-phosphate: step 5/5. Functionally, catalyzes the complicated ring closure reaction between the two acyclic compounds 1-deoxy-D-xylulose-5-phosphate (DXP) and 3-amino-2-oxopropyl phosphate (1-amino-acetone-3-phosphate or AAP) to form pyridoxine 5'-phosphate (PNP) and inorganic phosphate. This is Pyridoxine 5'-phosphate synthase from Christiangramia forsetii (strain DSM 17595 / CGMCC 1.15422 / KT0803) (Gramella forsetii).